The sequence spans 190 residues: Holliday junction branch migration complex subunit RuvA (190 aa).

A domain I region spans residues 1-64; it reads MIGSLTGIIE…DNLTQLYGFL (64 aa). The interval 65–142 is domain II; it reads DKQEQDYMRM…KMPIEETLII (78 aa). A region of interest (flexible linker) is located at residue lysine 143. The segment at 143–190 is domain III; that stretch reads KEDDSLAALISLGYDKLKAFNAIQEIKANFPDDSIQEIIRKALQKLSQ.

This sequence belongs to the RuvA family. Homotetramer. Forms an RuvA(8)-RuvB(12)-Holliday junction (HJ) complex. HJ DNA is sandwiched between 2 RuvA tetramers; dsDNA enters through RuvA and exits via RuvB. An RuvB hexamer assembles on each DNA strand where it exits the tetramer. Each RuvB hexamer is contacted by two RuvA subunits (via domain III) on 2 adjacent RuvB subunits; this complex drives branch migration. In the full resolvosome a probable DNA-RuvA(4)-RuvB(12)-RuvC(2) complex forms which resolves the HJ.

Its subcellular location is the cytoplasm. Its function is as follows. The RuvA-RuvB-RuvC complex processes Holliday junction (HJ) DNA during genetic recombination and DNA repair, while the RuvA-RuvB complex plays an important role in the rescue of blocked DNA replication forks via replication fork reversal (RFR). RuvA specifically binds to HJ cruciform DNA, conferring on it an open structure. The RuvB hexamer acts as an ATP-dependent pump, pulling dsDNA into and through the RuvAB complex. HJ branch migration allows RuvC to scan DNA until it finds its consensus sequence, where it cleaves and resolves the cruciform DNA. This Ehrlichia chaffeensis (strain ATCC CRL-10679 / Arkansas) protein is Holliday junction branch migration complex subunit RuvA.